The sequence spans 482 residues: MSSKKRSFGDIEFGESDEVGGTNVDVNGEDDFENDDEVESFEDDEQSFEEIEEGGEEGGDNDGEDKGPKKVWRAGVDPLEEDEVLDYDSTAYDMMHSMSVEWPCLSFHPIKDELGAQRNKYPHTMYLVAGTQADEAKNNKVIIMKAKQLHKTKHDDEDSDDDEDSDDDEESDDEDDEDKDVDPELQLAFINHNGAVNRIRSMDQQSNIVATWSDNRSVYIWNIANHLKALDNETVAPKQTAPLHTISNHSIEGYALDWSPKIAGRLATGDCNNSIFVTNASESTWKTDTQAFKGHTESVEDIQWSPSEEKVFASCSIDQTVRIWDIRKPKPAITVKAHTADVNVISWSRNVEYLLVSGCDDGSFRVWDLRAFKDNSPVSDFKYHTGPITSIEWNPYEESQVIVSSSDDQVTIWDFSLEEDTEEFTNANANPDDDFQYPPQLFFIHQGQHDIKEVHWHPQIPHVAISTSIDGFNIFKSSNSEE.

2 disordered regions span residues 1–75 and 148–180; these read MSSK…WRAG and QLHKTKHDDEDSDDDEDSDDDEESDDEDDEDKD. 2 stretches are compositionally biased toward acidic residues: residues 27 to 63 and 157 to 180; these read NGEDDFENDDEVESFEDDEQSFEEIEEGGEEGGDNDG and EDSDDDEDSDDDEESDDEDDEDKD. WD repeat units lie at residues 191-231, 294-334, 337-377, 383-423, and 446-482; these read NHNG…KALD, GHTE…PAIT, AHTA…DNSP, YHTG…DTEE, and QGQHDIKEVHWHPQIPHVAISTSIDGFNIFKSSNSEE.

Its subcellular location is the nucleus. It localises to the nucleolus. The protein is Glutamate-rich WD repeat-containing protein 1 (grwd1) of Dictyostelium discoideum (Social amoeba).